Reading from the N-terminus, the 505-residue chain is Protein disulfide-isomerase A3 (505 aa).

An N-terminal signal peptide occupies residues 1 to 24 (MSVPRPSRAALLLLVPLLALSAGA). 2 consecutive Thioredoxin domains span residues 25-131 (SDVV…KQAG) and 341-483 (SRDG…REAT). Residues Cys55 and Cys58 each act as nucleophile in the active site. Disulfide bonds link Cys55/Cys58, Cys83/Cys90, and Cys404/Cys407. Catalysis depends on nucleophile residues Cys404 and Cys407. The interval 486 to 505 (PVLQEEDKAKKSKKKAKEDL) is disordered. Residues 495–505 (KKSKKKAKEDL) are compositionally biased toward basic residues. Residues 502 to 505 (KEDL) carry the Prevents secretion from ER motif.

This sequence belongs to the protein disulfide isomerase family.

The protein resides in the endoplasmic reticulum. Its subcellular location is the endoplasmic reticulum lumen. The protein localises to the melanosome. It catalyses the reaction Catalyzes the rearrangement of -S-S- bonds in proteins.. Its function is as follows. Protein disulfide isomerase that catalyzes the formation, isomerization, and reduction or oxidation of disulfide bonds in client proteins and functions as a protein folding chaperone. This chain is Protein disulfide-isomerase A3 (PDIA3), found in Gallus gallus (Chicken).